We begin with the raw amino-acid sequence, 253 residues long: 1-(5-phosphoribosyl)-5-[(5-phosphoribosylamino)methylideneamino] imidazole-4-carboxamide isomerase (253 aa).

The active-site Proton acceptor is the Asp8. Asp131 functions as the Proton donor in the catalytic mechanism.

The protein belongs to the HisA/HisF family.

The protein resides in the cytoplasm. It carries out the reaction 1-(5-phospho-beta-D-ribosyl)-5-[(5-phospho-beta-D-ribosylamino)methylideneamino]imidazole-4-carboxamide = 5-[(5-phospho-1-deoxy-D-ribulos-1-ylimino)methylamino]-1-(5-phospho-beta-D-ribosyl)imidazole-4-carboxamide. Its pathway is amino-acid biosynthesis; L-histidine biosynthesis; L-histidine from 5-phospho-alpha-D-ribose 1-diphosphate: step 4/9. This chain is 1-(5-phosphoribosyl)-5-[(5-phosphoribosylamino)methylideneamino] imidazole-4-carboxamide isomerase, found in Polynucleobacter asymbioticus (strain DSM 18221 / CIP 109841 / QLW-P1DMWA-1) (Polynucleobacter necessarius subsp. asymbioticus).